The sequence spans 167 residues: Protein-export protein SecB (167 aa).

It belongs to the SecB family. As to quaternary structure, homotetramer, a dimer of dimers. One homotetramer interacts with 1 SecA dimer.

Its subcellular location is the cytoplasm. One of the proteins required for the normal export of preproteins out of the cell cytoplasm. It is a molecular chaperone that binds to a subset of precursor proteins, maintaining them in a translocation-competent state. It also specifically binds to its receptor SecA. This Cellvibrio japonicus (strain Ueda107) (Pseudomonas fluorescens subsp. cellulosa) protein is Protein-export protein SecB.